Consider the following 299-residue polypeptide: Acetylglutamate kinase (299 aa).

Residues 72 to 73, Arg94, and Asn196 each bind substrate; that span reads GG.

It belongs to the acetylglutamate kinase family. ArgB subfamily.

It is found in the cytoplasm. It catalyses the reaction N-acetyl-L-glutamate + ATP = N-acetyl-L-glutamyl 5-phosphate + ADP. It functions in the pathway amino-acid biosynthesis; L-arginine biosynthesis; N(2)-acetyl-L-ornithine from L-glutamate: step 2/4. Catalyzes the ATP-dependent phosphorylation of N-acetyl-L-glutamate. The chain is Acetylglutamate kinase from Paraburkholderia phymatum (strain DSM 17167 / CIP 108236 / LMG 21445 / STM815) (Burkholderia phymatum).